Here is a 360-residue protein sequence, read N- to C-terminus: Probable cinnamyl alcohol dehydrogenase 9 (360 aa).

Residue Cys50 coordinates Zn(2+). Thr52 contacts NADP(+). The Zn(2+) site is built by His72, Glu73, Cys103, Cys106, Cys109, Cys117, and Cys166. NADP(+) contacts are provided by residues Thr170, 191 to 196 (GLGGLG), 214 to 219 (SSSSTK), Thr254, Gly278, and 301 to 303 (SDV).

Belongs to the zinc-containing alcohol dehydrogenase family. Homodimer. The cofactor is Zn(2+). Expressed in the vasculature of the primary root and elongation regions. Expressed in the hypocotyl, cotyledon veins, vasculature of the first rosette leaves, and hydathodes. In stems, expressed in the vascular cambium, interfascicular cambium, developing xylem, and phloem. Expressed in the entire floral organs at late developing stage, and in the abscission, style and stigmatic regions of siliques and seed funicules.

It carries out the reaction (E)-cinnamyl alcohol + NADP(+) = (E)-cinnamaldehyde + NADPH + H(+). It participates in aromatic compound metabolism; phenylpropanoid biosynthesis. Functionally, involved in lignin biosynthesis. May catalyze the final step specific for the production of lignin monomers, like coniferyl alcohol, sinapyl alcohol and 4-coumaryl alcohol. This Arabidopsis thaliana (Mouse-ear cress) protein is Probable cinnamyl alcohol dehydrogenase 9 (CAD9).